Here is a 605-residue protein sequence, read N- to C-terminus: uncharacterized protein (605 aa).

Residues 56 to 78 (ILWSSIAAACVILFAAYKTGAYF) traverse the membrane as a helical segment.

Its subcellular location is the cell membrane. This is an uncharacterized protein from Bacillus subtilis (strain 168).